The following is a 232-amino-acid chain: Large ribosomal subunit protein uL1 (232 aa).

This sequence belongs to the universal ribosomal protein uL1 family. In terms of assembly, part of the 50S ribosomal subunit.

Its function is as follows. Binds directly to 23S rRNA. The L1 stalk is quite mobile in the ribosome, and is involved in E site tRNA release. In terms of biological role, protein L1 is also a translational repressor protein, it controls the translation of the L11 operon by binding to its mRNA. This Burkholderia lata (strain ATCC 17760 / DSM 23089 / LMG 22485 / NCIMB 9086 / R18194 / 383) protein is Large ribosomal subunit protein uL1.